Reading from the N-terminus, the 745-residue chain is Kinesin-like protein KIN-14M (745 aa).

Positions 1–31 (MVGEMTNNGRIRPSFPVKDLTSNEGSEYGGP) are disordered. The globular stretch occupies residues 1–35 (MVGEMTNNGRIRPSFPVKDLTSNEGSEYGGPVEFT). Microtubule-binding stretches follow at residues 65 to 77 (YVKR…RWFQ) and 198 to 745 (SLQL…LSLG). Coiled-coil stretches lie at residues 76 to 223 (FQEL…GEKE) and 259 to 389 (KDEL…GNIR). The region spanning 387–724 (NIRVFCRVRP…LRFAARVNAC (338 aa)) is the Kinesin motor domain. 472 to 479 (GQTGSGKT) contributes to the ATP binding site.

This sequence belongs to the TRAFAC class myosin-kinesin ATPase superfamily. Kinesin family. KIN-14 subfamily. In terms of assembly, bind to microtubules in an ATP-insensitive manner (in vitro). Homodimer and heterodimer with KIN14N/KATC (in vitro).

The protein localises to the cytoplasm. The protein resides in the cytoskeleton. In Arabidopsis thaliana (Mouse-ear cress), this protein is Kinesin-like protein KIN-14M.